The chain runs to 330 residues: Cyclic AMP receptor-like protein E (330 aa).

At 1 to 10 the chain is on the extracellular side; the sequence is MLSLSSYVLN. Residues 11-31 form a helical membrane-spanning segment; it reads LVGSILCLIGCLFIIGHFFWI. The Cytoplasmic segment spans residues 32-40; that stretch reads PLLRTSLSR. A helical membrane pass occupies residues 41 to 61; sequence IIIYPTFILLLYDMVSFPSFI. The Extracellular portion of the chain corresponds to 62-85; it reads SKTADLYIERSTIICNFQEAIIQY. The helical transmembrane segment at 86–106 threads the bilayer; it reads LILSNFIWSVCISVNLLYLCF. Over 107-116 the chain is Cytoplasmic; the sequence is SPNKNLKKNE. A helical membrane pass occupies residues 117–137; the sequence is LLYHLCSWGIPLIVVVITKIP. Residues 138 to 156 are Extracellular-facing; sequence NMISDNGNQCRFKSPNYIK. The chain crosses the membrane as a helical span at residues 157–177; it reads FYLETILFIAFMLFNFIVAFI. Residues 178–213 are Cytoplasmic-facing; it reads TIKHIISGNLRESETTTTSVLFVNEKKITTKKIVWR. The chain crosses the membrane as a helical span at residues 214-234; sequence LLLYPSILSICYIMTLVLSIY. Over 235–274 the chain is Extracellular; it reads QFSTESYGSGGAYANSINNKRNDKNTESGNSNNNNNSYIE. An N-linked (GlcNAc...) asparagine glycan is attached at Asn269. A helical transmembrane segment spans residues 275-295; the sequence is ILLYISKAIFLLQGFFNALVY. The Cytoplasmic segment spans residues 296-330; sequence LRSSKLRDRYKKITIFRKIFWRDEADYQSINDGFN.

Belongs to the G-protein coupled receptor 5 family.

The protein localises to the membrane. Functionally, receptor for cAMP. The sequence is that of Cyclic AMP receptor-like protein E (crlE) from Dictyostelium discoideum (Social amoeba).